The following is a 158-amino-acid chain: 2-C-methyl-D-erythritol 2,4-cyclodiphosphate synthase (158 aa).

A divalent metal cation-binding residues include Asp-9 and His-11. 4-CDP-2-C-methyl-D-erythritol 2-phosphate is bound by residues 9–11 (DVH) and 35–36 (HS). Residue His-43 coordinates a divalent metal cation. 4-CDP-2-C-methyl-D-erythritol 2-phosphate-binding positions include 57 to 59 (DIG), 62 to 66 (FPDTD), 101 to 107 (AQAPKMA), 133 to 136 (TTTE), Phe-140, and Arg-143.

This sequence belongs to the IspF family. In terms of assembly, homotrimer. It depends on a divalent metal cation as a cofactor.

The enzyme catalyses 4-CDP-2-C-methyl-D-erythritol 2-phosphate = 2-C-methyl-D-erythritol 2,4-cyclic diphosphate + CMP. Its pathway is isoprenoid biosynthesis; isopentenyl diphosphate biosynthesis via DXP pathway; isopentenyl diphosphate from 1-deoxy-D-xylulose 5-phosphate: step 4/6. Involved in the biosynthesis of isopentenyl diphosphate (IPP) and dimethylallyl diphosphate (DMAPP), two major building blocks of isoprenoid compounds. Catalyzes the conversion of 4-diphosphocytidyl-2-C-methyl-D-erythritol 2-phosphate (CDP-ME2P) to 2-C-methyl-D-erythritol 2,4-cyclodiphosphate (ME-CPP) with a corresponding release of cytidine 5-monophosphate (CMP). This is 2-C-methyl-D-erythritol 2,4-cyclodiphosphate synthase from Vibrio cholerae serotype O1 (strain ATCC 39541 / Classical Ogawa 395 / O395).